The primary structure comprises 130 residues: ATP synthase epsilon chain (130 aa).

Belongs to the ATPase epsilon chain family. In terms of assembly, F-type ATPases have 2 components, CF(1) - the catalytic core - and CF(0) - the membrane proton channel. CF(1) has five subunits: alpha(3), beta(3), gamma(1), delta(1), epsilon(1). CF(0) has three main subunits: a, b and c.

The protein resides in the cell inner membrane. In terms of biological role, produces ATP from ADP in the presence of a proton gradient across the membrane. The protein is ATP synthase epsilon chain of Campylobacter hominis (strain ATCC BAA-381 / DSM 21671 / CCUG 45161 / LMG 19568 / NCTC 13146 / CH001A).